The following is a 370-amino-acid chain: Chloromuconate cycloisomerase (370 aa).

The active-site Proton acceptor is the Lys165. Mn(2+) is bound by residues Asp194, Glu220, and Asp245. Residue Glu323 is the Proton donor of the active site.

It belongs to the mandelate racemase/muconate lactonizing enzyme family. The cofactor is Mn(2+).

The enzyme catalyses 2-[(2R)-2-chloro-2,5-dihydro-5-oxofuryl]acetate = 3-chloro-cis,cis-muconate + H(+). The protein operates within aromatic compound metabolism; 3-chlorocatechol degradation. The sequence is that of Chloromuconate cycloisomerase (tcbD) from Pseudomonas sp. (strain P51).